The following is a 431-amino-acid chain: Probable pectate lyase 1 (431 aa).

A signal peptide spans 1 to 20 (MAVLPTWLLAMMCLLFFVGA). Asn-23, Asn-28, and Asn-65 each carry an N-linked (GlcNAc...) asparagine glycan. Residues Asp-227, Asp-251, and Asp-255 each contribute to the Ca(2+) site. The active site involves Arg-307.

This sequence belongs to the polysaccharide lyase 1 family. The cofactor is Ca(2+). Expressed in flowers, but not in leaves.

The enzyme catalyses Eliminative cleavage of (1-&gt;4)-alpha-D-galacturonan to give oligosaccharides with 4-deoxy-alpha-D-galact-4-enuronosyl groups at their non-reducing ends.. Its pathway is glycan metabolism; pectin degradation; 2-dehydro-3-deoxy-D-gluconate from pectin: step 2/5. This Arabidopsis thaliana (Mouse-ear cress) protein is Probable pectate lyase 1.